Consider the following 481-residue polypeptide: Fibrinogen beta chain (481 aa).

An N-terminal signal peptide occupies residues 1–19 (MRHLWLLLLLCVFSVQTQA). The interval 22 to 81 (DDYDEPTDSLDARGHRPVDRRKEEPPSLRPAPPPISGGGYRARPAKATANQKKVERRPPD) is disordered. Positions 31–47 (LDARGHRPVDRRKEEPP) are enriched in basic and acidic residues. The segment at 35-37 (GHR) is beta-chain polymerization, binding distal domain of another fibrin. Positions 149–213 (QAQVKENENV…SDISAQMEYC (65 aa)) form a coiled coil. 2 cysteine pairs are disulfide-bonded: cysteine 221–cysteine 306 and cysteine 231–cysteine 260. In terms of domain architecture, Fibrinogen C-terminal spans 222–478 (NIPVVSGKEC…RMSMKIRPFF (257 aa)). Asparagine 384 is a glycosylation site (N-linked (GlcNAc...) asparagine). A disulfide bond links cysteine 414 and cysteine 427.

As to quaternary structure, heterohexamer; disulfide linked. Contains 2 sets of 3 non-identical chains (alpha, beta and gamma). The 2 heterotrimers are in head to head conformation with the N-termini in a small central domain. Post-translationally, conversion of fibrinogen to fibrin is triggered by thrombin, which cleaves fibrinopeptides A and B from alpha and beta chains, and thus exposes the N-terminal polymerization sites responsible for the formation of the soft clot.

The protein localises to the secreted. Its function is as follows. Cleaved by the protease thrombin to yield monomers which, together with fibrinogen alpha (FGA) and fibrinogen gamma (FGG), polymerize to form an insoluble fibrin matrix. Fibrin has a major function in hemostasis as one of the primary components of blood clots. In addition, functions during the early stages of wound repair to stabilize the lesion and guide cell migration during re-epithelialization. Was originally thought to be essential for platelet aggregation, based on in vitro studies using anticoagulated blood. However, subsequent studies have shown that it is not absolutely required for thrombus formation in vivo. Enhances expression of SELP in activated platelets via an ITGB3-dependent pathway. Maternal fibrinogen is essential for successful pregnancy. Fibrin deposition is also associated with infection, where it protects against IFNG-mediated hemorrhage. May also facilitate the immune response via both innate and T-cell mediated pathways. The protein is Fibrinogen beta chain (Fgb) of Mus musculus (Mouse).